Consider the following 177-residue polypeptide: Transcription factor E (177 aa).

The HTH TFE/IIEalpha-type domain maps to 9 to 91; it reads VEELLNELVG…YWRINYDKAL (83 aa).

Belongs to the TFE family. As to quaternary structure, monomer. Interaction with RNA polymerase subunits RpoF and RpoE is necessary for Tfe stimulatory transcription activity. Able to interact with Tbp and RNA polymerase in the absence of DNA promoter. Interacts both with the preinitiation and elongation complexes.

Transcription factor that plays a role in the activation of archaeal genes transcribed by RNA polymerase. Facilitates transcription initiation by enhancing TATA-box recognition by TATA-box-binding protein (Tbp), and transcription factor B (Tfb) and RNA polymerase recruitment. Not absolutely required for transcription in vitro, but particularly important in cases where Tbp or Tfb function is not optimal. It dynamically alters the nucleic acid-binding properties of RNA polymerases by stabilizing the initiation complex and destabilizing elongation complexes. Seems to translocate with the RNA polymerase following initiation and acts by binding to the non template strand of the transcription bubble in elongation complexes. The protein is Transcription factor E of Archaeoglobus fulgidus (strain ATCC 49558 / DSM 4304 / JCM 9628 / NBRC 100126 / VC-16).